We begin with the raw amino-acid sequence, 455 residues long: Rhodopsin (455 aa).

The Extracellular portion of the chain corresponds to 1-34 (MVESTTLVNQTWWYNPTVDIHPHWAKFDPIPDAV). N-linked (GlcNAc...) asparagine glycosylation occurs at asparagine 9. Residues 35–59 (YYSVGIFIGVVGIIGILGNGVVIYL) form a helical membrane-spanning segment. At 60–71 (FSKTKSLQTPAN) the chain is on the cytoplasmic side. The helical transmembrane segment at 72-98 (MFIINLAMSDLSFSAINGFPLKTISAF) threads the bilayer. Residues 99–110 (MKKWIFGKVACQ) lie on the Extracellular side of the membrane. A disulfide bond links cysteine 109 and cysteine 187. The chain crosses the membrane as a helical span at residues 111 to 132 (LYGLLGGIFGFMSINTMAMISI). The 'Ionic lock' involved in activated form stabilization motif lies at 133–135 (DRY). Residues 133–152 (DRYNVIGRPMAASKKMSHRR) are Cytoplasmic-facing. Residues 153 to 173 (AFLMIIFVWMWSIVWSVGPVF) traverse the membrane as a helical segment. At 174-200 (NWGAYVPEGILTSCSFDYLSTDPSTRS) the chain is on the extracellular side. The helical transmembrane segment at 201–225 (FILCMYFCGFMLPIIIIAFCYFNIV) threads the bilayer. At 226-262 (MSVSNHEKEMAAMAKRLNAKELRKAQAGASAEMKLAK) the chain is on the cytoplasmic side. A helical membrane pass occupies residues 263–284 (ISMVIITQFMLSWSPYAIIALL). Topologically, residues 285–294 (AQFGPAEWVT) are extracellular. Residues 295–316 (PYAAELPVLFAKASAIHNPIVY) form a helical membrane-spanning segment. Lysine 306 carries the post-translational modification N6-(retinylidene)lysine. At 317-455 (SVSHPKFREA…QGVDNQAYQA (139 aa)) the chain is on the cytoplasmic side. 2 S-palmitoyl cysteine lipidation sites follow: cysteine 337 and cysteine 338. Over residues 378 to 387 (QKMQAQQAAY) the composition is skewed to low complexity. Residues 378-455 (QKMQAQQAAY…QGVDNQAYQA (78 aa)) form a disordered region. Positions 388 to 433 (QPPPPPQGYPPQGYPPQGAYPPPQGYPPQGYPPQGYPPQGYPPQGA) are enriched in pro residues. Tandem repeats lie at residues 395–399 (GYPPQ), 400–404 (GYPPQ), 412–416 (GYPPQ), 417–421 (GYPPQ), 422–426 (GYPPQ), and 427–431 (GYPPQ). The tract at residues 395–431 (GYPPQGYPPQGAYPPPQGYPPQGYPPQGYPPQGYPPQ) is 6 X 5 AA repeats of G-Y-P-P-Q.

The protein belongs to the G-protein coupled receptor 1 family. Opsin subfamily. In terms of processing, contains one covalently linked retinal chromophore. Upon light absorption, the covalently bound 11-cis-retinal is converted to all-trans-retinal. After hydrolysis of the Schiff base and release of the covalently bound all-trans-retinal, active rhodopsin is regenerated by binding of a fresh molecule of 11-cis-retinal.

It is found in the cell projection. The protein resides in the rhabdomere membrane. Photoreceptor required for image-forming vision at low light intensity. Light-induced isomerization of 11-cis to all-trans retinal triggers a conformational change that activates signaling via G-proteins. Signaling mediates the activation of phospholipase C. Subsequent receptor phosphorylation mediates displacement of the bound G-protein alpha subunit by arrestin and terminates signaling. The polypeptide is Rhodopsin (RHO) (Enteroctopus dofleini (North Pacific giant octopus)).